Reading from the N-terminus, the 172-residue chain is Large ribosomal subunit protein bL9 (172 aa).

It belongs to the bacterial ribosomal protein bL9 family.

In terms of biological role, binds to the 23S rRNA. The sequence is that of Large ribosomal subunit protein bL9 from Chlamydia abortus (strain DSM 27085 / S26/3) (Chlamydophila abortus).